Here is a 191-residue protein sequence, read N- to C-terminus: Xanthine phosphoribosyltransferase (191 aa).

Xanthine is bound by residues Leu-20 and Asn-27. 128-132 contacts 5-phospho-alpha-D-ribose 1-diphosphate; that stretch reads ANGQA. Lys-156 is a xanthine binding site.

Belongs to the purine/pyrimidine phosphoribosyltransferase family. Xpt subfamily. Homodimer.

Its subcellular location is the cytoplasm. It catalyses the reaction XMP + diphosphate = xanthine + 5-phospho-alpha-D-ribose 1-diphosphate. It participates in purine metabolism; XMP biosynthesis via salvage pathway; XMP from xanthine: step 1/1. In terms of biological role, converts the preformed base xanthine, a product of nucleic acid breakdown, to xanthosine 5'-monophosphate (XMP), so it can be reused for RNA or DNA synthesis. This Acinetobacter baylyi (strain ATCC 33305 / BD413 / ADP1) protein is Xanthine phosphoribosyltransferase.